The primary structure comprises 721 residues: Polyphosphate kinase (721 aa).

Asn47 is an ATP binding site. Mg(2+)-binding residues include Arg377 and Arg407. Catalysis depends on His437, which acts as the Phosphohistidine intermediate. ATP-binding residues include Tyr471, Arg567, and His595.

This sequence belongs to the polyphosphate kinase 1 (PPK1) family. Mg(2+) serves as cofactor. In terms of processing, an intermediate of this reaction is the autophosphorylated ppk in which a phosphate is covalently linked to a histidine residue through a N-P bond.

The enzyme catalyses [phosphate](n) + ATP = [phosphate](n+1) + ADP. Functionally, catalyzes the reversible transfer of the terminal phosphate of ATP to form a long-chain polyphosphate (polyP). The protein is Polyphosphate kinase of Exiguobacterium sp. (strain ATCC BAA-1283 / AT1b).